The primary structure comprises 193 residues: dCTP deaminase (193 aa).

Residues 110–115 (RSSLAR), D128, 136–138 (VLE), Y171, K178, and Q182 each bind dCTP. The Proton donor/acceptor role is filled by E138. The segment at 169 to 193 (RPYNRREDAKYRNQQGAVASRIDKD) is disordered.

The protein belongs to the dCTP deaminase family. Homotrimer.

The enzyme catalyses dCTP + H2O + H(+) = dUTP + NH4(+). Its pathway is pyrimidine metabolism; dUMP biosynthesis; dUMP from dCTP (dUTP route): step 1/2. Catalyzes the deamination of dCTP to dUTP. The chain is dCTP deaminase from Escherichia coli O8 (strain IAI1).